The chain runs to 392 residues: Protein O-glucosyltransferase 1 (392 aa).

The N-terminal stretch at 1-23 (MERRAGSRLRAWMLLLLLCPVQG) is a signal peptide. Cystine bridges form between C49/C56, C54/C357, C102/C108, and C263/C286. N53 carries N-linked (GlcNAc...) asparagine glycosylation. The interval 103–107 (MFPSR) is interaction with the consensus sequence C-X-S-X-[PA]-C in peptide substrates. The active-site Proton donor/acceptor is the D133. An interaction with the consensus sequence C-X-S-X-[PA]-C in peptide substrates region spans residues 172–178 (AVWPLYP). Position 177 (Y177) interacts with UDP-alpha-D-glucose. N-linked (GlcNAc...) asparagine glycosylation occurs at N204. Residues S212, R218, and 274-279 (VAASFR) contribute to the UDP-alpha-D-glucose site. N373 is a glycosylation site (N-linked (GlcNAc...) asparagine). The Prevents secretion from ER motif lies at 389–392 (KTEL).

The protein belongs to the glycosyltransferase 90 family. Widely expressed in newborn and adult tissues (at protein level).

The protein resides in the endoplasmic reticulum lumen. It catalyses the reaction L-seryl-[EGF-like domain protein] + UDP-alpha-D-xylose = 3-O-(beta-D-xylosyl)-L-seryl-[EGF-like domain protein] + UDP + H(+). The enzyme catalyses L-seryl-[EGF-like domain protein] + UDP-alpha-D-glucose = 3-O-(beta-D-glucosyl)-L-seryl-[EGF-like domain protein] + UDP + H(+). It participates in protein modification; protein glycosylation. Its function is as follows. Dual specificity glycosyltransferase that catalyzes the transfer of glucose and xylose from UDP-glucose and UDP-xylose, respectively, to a serine residue found in the consensus sequence of C-X-S-X-P-C. Specifically targets extracellular EGF repeats of protein such as CRB2, F7, F9 and NOTCH2. Acts as a positive regulator of Notch signaling by mediating O-glucosylation of Notch, leading to regulate muscle development. Notch glucosylation does not affect Notch ligand binding. Required during early development to promote gastrulation: acts by mediating O-glucosylation of CRB2, which is required for CRB2 localization to the cell membrane. In Mus musculus (Mouse), this protein is Protein O-glucosyltransferase 1.